We begin with the raw amino-acid sequence, 98 residues long: N(2)-fixation sustaining protein CowN (98 aa).

It belongs to the CowN family.

Functionally, is required to sustain N(2)-dependent growth in the presence of low levels of carbon monoxide (CO). Probably acts by protecting the N(2) fixation ability of the nitrogenase complex, which is inactivated in the presence of CO. The chain is N(2)-fixation sustaining protein CowN from Paramagnetospirillum magneticum (strain ATCC 700264 / AMB-1) (Magnetospirillum magneticum).